A 282-amino-acid polypeptide reads, in one-letter code: 4-hydroxybenzoate octaprenyltransferase (282 aa).

A run of 9 helical transmembrane segments spans residues 17–37, 40–60, 90–110, 113–133, 135–155, 163–183, 207–227, 231–251, and 262–282; these read IGILLLWYPTAWALWMANQGF, IDLLMIFLLGTVFMRSAGCVI, AFILLFILLCASLLLLLKLPI, FYFAVISVLITFVYPFCKRFL, APQLILGLAFSMGIPMAFIAS, FVVLFLINFTWIIAYDTMYAM, LIIALLLIFLHSLWLVWAINK, WFFYLLWCTAAGILTYQLKLI, and AFLVSGYYGLVMWFAVGLALI.

This sequence belongs to the UbiA prenyltransferase family. Requires Mg(2+) as cofactor.

It localises to the cell inner membrane. The enzyme catalyses all-trans-octaprenyl diphosphate + 4-hydroxybenzoate = 4-hydroxy-3-(all-trans-octaprenyl)benzoate + diphosphate. It participates in cofactor biosynthesis; ubiquinone biosynthesis. Functionally, catalyzes the prenylation of para-hydroxybenzoate (PHB) with an all-trans polyprenyl group. Mediates the second step in the final reaction sequence of ubiquinone-8 (UQ-8) biosynthesis, which is the condensation of the polyisoprenoid side chain with PHB, generating the first membrane-bound Q intermediate 3-octaprenyl-4-hydroxybenzoate. The chain is 4-hydroxybenzoate octaprenyltransferase from Legionella pneumophila (strain Paris).